The chain runs to 48 residues: ATP synthase protein 8 (48 aa).

A helical membrane pass occupies residues 12-32 (LLTGGILAISLLLYFVATYLL).

It belongs to the ATPase protein 8 family. F-type ATPases have 2 components, CF(1) - the catalytic core - and CF(0) - the membrane proton channel.

It is found in the mitochondrion membrane. Mitochondrial membrane ATP synthase (F(1)F(0) ATP synthase or Complex V) produces ATP from ADP in the presence of a proton gradient across the membrane which is generated by electron transport complexes of the respiratory chain. F-type ATPases consist of two structural domains, F(1) - containing the extramembraneous catalytic core and F(0) - containing the membrane proton channel, linked together by a central stalk and a peripheral stalk. During catalysis, ATP synthesis in the catalytic domain of F(1) is coupled via a rotary mechanism of the central stalk subunits to proton translocation. Part of the complex F(0) domain. Minor subunit located with subunit a in the membrane. This is ATP synthase protein 8 (ATP8) from Candida parapsilosis (Yeast).